The primary structure comprises 288 residues: Prohibitin-2 (288 aa).

A helical; Signal-anchor for type II membrane protein membrane pass occupies residues 21-43 (GKYAFTGTGLLLALGLAGFAVQT). The AIM signature appears at 125-128 (YRTL).

The protein belongs to the prohibitin family. As to quaternary structure, the mitochondrial prohibitin complex consists of two subunits (phb1 and phb2). The subunits assemble into a membrane-associated ring-shaped supercomplex of approximately 1 mDa.

The protein resides in the mitochondrion inner membrane. Its function is as follows. Prohibitin probably acts as a holdase/unfoldase for the stabilization of newly synthesized mitochondrial proteins. Involved in mitophagy; may act as an adapter for atg8 that supports mitophagosome assembly. Negatively regulates the proteolytic processing of atg32 via the i-AAA protease. Acts as a negative regulator of the m-AAA protease. The protein is Prohibitin-2 (phb2) of Schizosaccharomyces pombe (strain 972 / ATCC 24843) (Fission yeast).